Consider the following 370-residue polypeptide: Platelet-derived growth factor D (370 aa).

Residues 1 to 18 form the signal peptide; the sequence is MHRLIFVCTLVCANFCSC. One can recognise a CUB domain in the interval 52 to 170; it reads RDETIQVRGN…PGFKIYYSLL (119 aa). Cysteine 109 and cysteine 131 form a disulfide bridge. Asparagine 276 is a glycosylation site (N-linked (GlcNAc...) asparagine). 2 cysteine pairs are disulfide-bonded: cysteine 302–cysteine 360 and cysteine 306–cysteine 362.

This sequence belongs to the PDGF/VEGF growth factor family. As to quaternary structure, homodimer; disulfide-linked. Interacts with PDGFRB homodimers, and with heterodimers formed by PDGFRA and PDGFRB. Post-translationally, activated by proteolytic cleavage. Proteolytic removal of the N-terminal CUB domain releasing the core domain is necessary for unmasking the receptor-binding epitopes of the core domain. Cleavage after Arg-247 or Arg-249 by urokinase plasminogen activator gives rise to the active form.

The protein resides in the secreted. Its function is as follows. Growth factor that plays an essential role in the regulation of embryonic development, cell proliferation, cell migration, survival and chemotaxis. Potent mitogen for cells of mesenchymal origin. Plays an important role in wound healing. Induces macrophage recruitment, increased interstitial pressure, and blood vessel maturation during angiogenesis. Can initiate events that lead to a mesangial proliferative glomerulonephritis, including influx of monocytes and macrophages and production of extracellular matrix. The sequence is that of Platelet-derived growth factor D (PDGFD) from Pongo abelii (Sumatran orangutan).